Here is a 574-residue protein sequence, read N- to C-terminus: Streptolysin O (574 aa).

A signal peptide spans Met1–Ser36. Low complexity predominate over residues Asn37–Gln52. Disordered stretches follow at residues Asn37–Lys64 and Lys84–Glu111. Residues Pro53 to Lys64 show a composition bias toward basic and acidic residues. Beta stranded transmembrane passes span Lys263–Ile276, Ile283–Glu292, Ser361–Ala370, and Lys378–Ser390. Residues Glu532–Arg542 carry the Conserved undecapeptide motif. Positions Thr564 to Leu565 match the Cholesterol binding motif.

This sequence belongs to the cholesterol-dependent cytolysin family. As to quaternary structure, homooligomeric pore complex of 35 to 50 subunits; when inserted in the host membrane.

It localises to the secreted. Its subcellular location is the host cell membrane. A cholesterol-dependent toxin that causes cytolysis by forming pores in cholesterol containing host membranes. After binding to target membranes, the protein undergoes a major conformation change, leading to its insertion in the host membrane and formation of an oligomeric pore complex. Cholesterol is required for binding to host membranes, membrane insertion and pore formation; cholesterol binding is mediated by a Thr-Leu pair in the C-terminus. Can be reversibly inactivated by oxidation. The protein is Streptolysin O (slo) of Streptococcus dysgalactiae subsp. equisimilis (Streptococcus equisimilis).